Consider the following 1884-residue polypeptide: Fatty acid synthase subunit alpha (1884 aa).

The segment at 91–141 (TPDPAEPPAAEEPKAETGKESAPAASAAAAAATQPAAAVAPPPQSAGPVES) is disordered. The span at 111 to 129 (SAPAASAAAAAATQPAAAV) shows a compositional bias: low complexity. The Carrier domain maps to 147–222 (VKASLLIHVL…EQFQDTFSGS (76 aa)). Position 182 is an O-(pantetheine 4'-phosphoryl)serine (Ser-182). Residues 583 to 613 (TEQTTQDALAIPTGSNTPTEEDELSTASDDD) are disordered. Residues 584-600 (EQTTQDALAIPTGSNTP) are compositionally biased toward polar residues. The segment covering 601 to 613 (TEEDELSTASDDD) has biased composition (acidic residues). Residues 677–873 (DKYVLVTGAG…CGAIIGWTRG (197 aa)) are beta-ketoacyl reductase. The Ketosynthase family 3 (KS3) domain occupies 1120–1660 (IQEVVIQHDL…QKGAQAVVVH (541 aa)). Catalysis depends on for beta-ketoacyl synthase activity residues Cys-1303, His-1545, and His-1586. The Mg(2+) site is built by Asp-1770, Val-1771, and Glu-1772. Residues 1770-1772 (DVE), Tyr-1796, Ser-1806, 1815-1825 (EATFKALGVSS), 1839-1842 (RDGN), and 1869-1871 (ISH) contribute to the acetyl-CoA site. The Mg(2+) site is built by Ser-1870 and His-1871.

It belongs to the thiolase-like superfamily. Fungal fatty acid synthetase subunit alpha family. As to quaternary structure, fatty acid synthase is composed of alpha and beta subunits.

It catalyses the reaction acetyl-CoA + n malonyl-CoA + 2n NADPH + 4n H(+) = a long-chain-acyl-CoA + n CoA + n CO2 + 2n NADP(+).. The enzyme catalyses a fatty acyl-[ACP] + malonyl-[ACP] + H(+) = a 3-oxoacyl-[ACP] + holo-[ACP] + CO2. It carries out the reaction a (3R)-hydroxyacyl-[ACP] + NADP(+) = a 3-oxoacyl-[ACP] + NADPH + H(+). Fatty acid synthetase catalyzes the formation of long-chain fatty acids from acetyl-CoA, malonyl-CoA and NADPH. The alpha subunit contains domains for: acyl carrier protein, 3-oxoacyl-[acyl-carrier-protein] reductase, and 3-oxoacyl-[acyl-carrier-protein] synthase. The protein is Fatty acid synthase subunit alpha (FAS2) of Candida parapsilosis (strain CDC 317 / ATCC MYA-4646) (Yeast).